Here is a 413-residue protein sequence, read N- to C-terminus: Aspartate aminotransferase, cytoplasmic (413 aa).

L-aspartate-binding residues include Gly-39 and Trp-141. The residue at position 149 (Ser-149) is a Phosphoserine. Asn-195 serves as a coordination point for L-aspartate. Lys-259 carries the post-translational modification N6-(pyridoxal phosphate)lysine. Arg-387 contributes to the L-aspartate binding site.

It belongs to the class-I pyridoxal-phosphate-dependent aminotransferase family. As to quaternary structure, homodimer. Pyridoxal 5'-phosphate is required as a cofactor.

It localises to the cytoplasm. The enzyme catalyses L-aspartate + 2-oxoglutarate = oxaloacetate + L-glutamate. The catalysed reaction is L-cysteine + 2-oxoglutarate = 2-oxo-3-sulfanylpropanoate + L-glutamate. It catalyses the reaction (2S)-2-aminobutanoate + 2-oxoglutarate = 2-oxobutanoate + L-glutamate. It carries out the reaction 3-sulfino-L-alanine + 2-oxoglutarate = 3-sulfinopyruvate + L-glutamate. Its function is as follows. Biosynthesis of L-glutamate from L-aspartate or L-cysteine. Important regulator of levels of glutamate, the major excitatory neurotransmitter of the vertebrate central nervous system. Acts as a scavenger of glutamate in brain neuroprotection. The aspartate aminotransferase activity is involved in hepatic glucose synthesis during development and in adipocyte glyceroneogenesis. Using L-cysteine as substrate, regulates levels of mercaptopyruvate, an important source of hydrogen sulfide. Mercaptopyruvate is converted into H(2)S via the action of 3-mercaptopyruvate sulfurtransferase (3MST). Hydrogen sulfide is an important synaptic modulator and neuroprotectant in the brain. In addition, catalyzes (2S)-2-aminobutanoate, a by-product in the cysteine biosynthesis pathway. The polypeptide is Aspartate aminotransferase, cytoplasmic (Homo sapiens (Human)).